A 233-amino-acid chain; its full sequence is Large ribosomal subunit protein uL1 (233 aa).

It belongs to the universal ribosomal protein uL1 family. In terms of assembly, part of the 50S ribosomal subunit.

Its function is as follows. Binds directly to 23S rRNA. The L1 stalk is quite mobile in the ribosome, and is involved in E site tRNA release. In terms of biological role, protein L1 is also a translational repressor protein, it controls the translation of the L11 operon by binding to its mRNA. The polypeptide is Large ribosomal subunit protein uL1 (Geobacillus sp. (strain WCH70)).